The chain runs to 537 residues: CTP synthase (537 aa).

The segment at 1-267 is amidoligase domain; the sequence is MTNTKFVFVT…ISVLEERLFG (267 aa). Position 15 (Ser15) interacts with CTP. UTP is bound at residue Ser15. An ATP-binding site is contributed by 16 to 21; the sequence is SVGKGI. Tyr56 serves as a coordination point for L-glutamine. Position 73 (Asp73) interacts with ATP. The Mg(2+) site is built by Asp73 and Glu141. Residues 148–150, 188–193, and Lys224 contribute to the CTP site; these read DIE and KTKPTQ. Residues 188-193 and Lys224 each bind UTP; that span reads KTKPTQ. The Glutamine amidotransferase type-1 domain occupies 297–535; it reads YVVLPDAYLS…LSEAVAKASP (239 aa). Gly355 is a binding site for L-glutamine. The Nucleophile; for glutamine hydrolysis role is filled by Cys382. Residues 383–386, Glu406, and Arg463 contribute to the L-glutamine site; that span reads LGMQ. Residues His508 and Glu510 contribute to the active site.

Belongs to the CTP synthase family. In terms of assembly, homotetramer.

The enzyme catalyses UTP + L-glutamine + ATP + H2O = CTP + L-glutamate + ADP + phosphate + 2 H(+). It catalyses the reaction L-glutamine + H2O = L-glutamate + NH4(+). It carries out the reaction UTP + NH4(+) + ATP = CTP + ADP + phosphate + 2 H(+). It functions in the pathway pyrimidine metabolism; CTP biosynthesis via de novo pathway; CTP from UDP: step 2/2. Allosterically activated by GTP, when glutamine is the substrate; GTP has no effect on the reaction when ammonia is the substrate. The allosteric effector GTP functions by stabilizing the protein conformation that binds the tetrahedral intermediate(s) formed during glutamine hydrolysis. Inhibited by the product CTP, via allosteric rather than competitive inhibition. Functionally, catalyzes the ATP-dependent amination of UTP to CTP with either L-glutamine or ammonia as the source of nitrogen. Regulates intracellular CTP levels through interactions with the four ribonucleotide triphosphates. This is CTP synthase from Coprothermobacter proteolyticus (strain ATCC 35245 / DSM 5265 / OCM 4 / BT).